A 77-amino-acid chain; its full sequence is Protein OPG195 (77 aa).

Residues 1–17 (MRSLIIVLLFPSIIYSM) form the signal peptide.

The protein belongs to the chordopoxvirinae B9 protein family.

The protein is Protein OPG195 (OPG197) of Homo sapiens (Human).